The chain runs to 385 residues: Putative hydroxypyruvate reductase (385 aa).

The catalysed reaction is (R)-glycerate + NAD(+) = 3-hydroxypyruvate + NADH + H(+). It catalyses the reaction (R)-glycerate + NADP(+) = 3-hydroxypyruvate + NADPH + H(+). It functions in the pathway carbohydrate acid metabolism; tartrate degradation; 3-hydroxypyruvate from D-glycerate: step 1/1. Functionally, degrades an unidentified toxic product from the first step of tartrate degradation. The protein is Putative hydroxypyruvate reductase (ttuD) of Agrobacterium vitis (Rhizobium vitis).